A 243-amino-acid chain; its full sequence is Probable transcriptional regulatory protein BDI_1233 (243 aa).

It belongs to the TACO1 family.

The protein localises to the cytoplasm. The chain is Probable transcriptional regulatory protein BDI_1233 from Parabacteroides distasonis (strain ATCC 8503 / DSM 20701 / CIP 104284 / JCM 5825 / NCTC 11152).